We begin with the raw amino-acid sequence, 176 residues long: Disulfide bond formation protein B (176 aa).

Residues 1-14 lie on the Cytoplasmic side of the membrane; sequence MMRSLNRCSKHRAA. A helical membrane pass occupies residues 15 to 31; it reads WLLLALTTFSLELVALY. The Periplasmic portion of the chain corresponds to 32–49; that stretch reads FQHVMLLKPCVLCVYQRC. An intrachain disulfide couples Cys-41 to Cys-44. A helical transmembrane segment spans residues 50-65; the sequence is ALYGVVAAGLVGAIAP. Residues 66–71 are Cytoplasmic-facing; sequence ATPLRF. Residues 72–89 form a helical membrane-spanning segment; the sequence is SGLAIWLYSAWEGLQLAM. Over 90–144 the chain is Periplasmic; that stretch reads KHTDIQLHPSPFVTCDFFVSFPAWLPLDKWLPSVFSASGDCAVRQWHFLSLEMPQ. Cysteines 104 and 130 form a disulfide. The chain crosses the membrane as a helical span at residues 145-163; sequence WMIVIFGAYLAVAVLILLA. Residues 164-176 lie on the Cytoplasmic side of the membrane; sequence QFFPPRKRDLFSR.

This sequence belongs to the DsbB family.

Its subcellular location is the cell inner membrane. Its function is as follows. Required for disulfide bond formation in some periplasmic proteins. Acts by oxidizing the DsbA protein. The polypeptide is Disulfide bond formation protein B (Sodalis glossinidius (strain morsitans)).